We begin with the raw amino-acid sequence, 1384 residues long: Contactin-associated protein 1 (1384 aa).

The signal sequence occupies residues 1–19; it reads MMHLRLFCILLAAVSGAEG. The Extracellular portion of the chain corresponds to 20-1283; sequence WGYYGCDEEL…PYYHDEGWVA (1264 aa). The region spanning 25 to 168 is the F5/8 type C domain; it reads CDEELVGPLY…IGLRLGLYGC (144 aa). C25 and C168 are joined by a disulfide. N120, N128, and N276 each carry an N-linked (GlcNAc...) asparagine glycan. 2 Laminin G-like domains span residues 203–355 and 389–538; these read FKTE…AFRC and FRTW…FDTC. An intrachain disulfide couples C323 to C355. N-linked (GlcNAc...) asparagine glycans are attached at residues N420, N499, and N518. Cystine bridges form between C506–C538, C544–C555, C549–C564, and C566–C576. The EGF-like 1 domain occupies 540-577; it reads ITDRCSPNMCEHDGRCYQSWDDFICYCELTGYKGETCH. Residues 576 to 795 enclose the Fibrinogen C-terminal domain; sequence CHTPLYKESC…NTISFHTGAA (220 aa). Residues N597, N653, N664, N763, N804, N843, N860, N948, and N956 are each glycosylated (N-linked (GlcNAc...) asparagine). Positions 813–956 constitute a Laminin G-like 3 domain; it reads FRTSAPSGVF…ANASEGTSPN (144 aa). Disulfide bonds link C930-C957, C961-C974, C968-C983, and C985-C995. An EGF-like 2 domain is found at 957-996; sequence CTGHCAHPRLPCFHGGRCVERYSYYTCDCDLTAFDGPYCN. Residues N1078 and N1147 are each glycosylated (N-linked (GlcNAc...) asparagine). One can recognise a Laminin G-like 4 domain in the interval 1088-1250; that stretch reads FSTSSAPAVL…VQGELSESNC (163 aa). Cysteines 1209 and 1250 form a disulfide. The chain crosses the membrane as a helical span at residues 1284–1304; that stretch reads ILLGFLVAFLLLGLVGMLVLF. At 1305-1384 the chain is on the cytoplasmic side; it reads YLQNHRYKGS…PQILEESRSE (80 aa). Positions 1319-1328 are enriched in basic and acidic residues; that stretch reads EPKAAHEYHP. Positions 1319 to 1384 are disordered; the sequence is EPKAAHEYHP…PQILEESRSE (66 aa). The SH3-binding motif lies at 1328–1369; it reads PGSKPPLPTSGPAQVPTPTAAPNQAPASAPAPAPTPAPAPGP. Residues 1339–1355 are compositionally biased toward low complexity; sequence PAQVPTPTAAPNQAPAS. Over residues 1356-1368 the composition is skewed to pro residues; it reads APAPAPTPAPAPG. The residue at position 1383 (S1383) is a Phosphoserine.

The protein belongs to the neurexin family. In terms of assembly, interacts with CNTN1/contactin in cis form. As to expression, predominantly expressed in brain. Weak expression detected in ovary, pancreas, colon, lung, heart, intestine and testis.

The protein localises to the membrane. It is found in the cell junction. The protein resides in the paranodal septate junction. Functionally, required, with CNTNAP2, for radial and longitudinal organization of myelinated axons. Plays a role in the formation of functional distinct domains critical for saltatory conduction of nerve impulses in myelinated nerve fibers. Demarcates the paranodal region of the axo-glial junction. In association with contactin involved in the signaling between axons and myelinating glial cells. The polypeptide is Contactin-associated protein 1 (CNTNAP1) (Homo sapiens (Human)).